The primary structure comprises 102 residues: Small ribosomal subunit protein uS10 (102 aa).

Belongs to the universal ribosomal protein uS10 family. In terms of assembly, part of the 30S ribosomal subunit.

Involved in the binding of tRNA to the ribosomes. The protein is Small ribosomal subunit protein uS10 of Methylorubrum populi (strain ATCC BAA-705 / NCIMB 13946 / BJ001) (Methylobacterium populi).